The chain runs to 168 residues: uncharacterized protein (168 aa).

One can recognise an HTH asnC-type domain in the interval 19–80 (LDKLDRHILN…VVSPKAVGRT (62 aa)). A DNA-binding region (H-T-H motif) is located at residues 38-57 (LKELSEKVNSSVATCQRRVQ).

This is an uncharacterized protein from Haemophilus influenzae (strain ATCC 51907 / DSM 11121 / KW20 / Rd).